Consider the following 759-residue polypeptide: Na(+)/H(+) exchanger beta (759 aa).

Over 1-14 (MPAFSCAFPGCRRD) the chain is Cytoplasmic. The helical transmembrane segment at 15–34 (LLVIVLVVFVGIGLPIEASA) threads the bilayer. Over 35–75 (PAYQSHGTEGSHLTNITNTKKAFPVLAVNYEHVRKPFEIAL) the chain is Extracellular. Asn-49 carries an N-linked (GlcNAc...) asparagine glycan. A helical transmembrane segment spans residues 76 to 95 (WILLALLMKLGFHLIPRLSA). The Cytoplasmic portion of the chain corresponds to 96–97 (VV). Residues 98 to 117 (PESCLLIVVGLLVGGLIKVI) traverse the membrane as a helical segment. The Extracellular segment spans residues 118 to 122 (GEEPP). Residues 123–142 (VLDSQLFFLCLLPPIILDAG) traverse the membrane as a helical segment. At 143–149 (YFLPIRP) the chain is on the cytoplasmic side. A helical transmembrane segment spans residues 150-169 (FTENVGTILVFAVIGTLWNA). Residues 170–195 (FFMGGLLYALCQIESVGLSGVDLLAC) lie on the Extracellular side of the membrane. The chain crosses the membrane as a helical span at residues 196–214 (LLFGSIVSAVDPVAVLAVF). The Cytoplasmic segment spans residues 215–225 (EEIHINELVHI). Residues 226 to 244 (LVFGESLLNDAVTVVLYNL) traverse the membrane as a helical segment. The Extracellular segment spans residues 245 to 261 (FEEFSKVGTVTVLDVFL). A helical transmembrane segment spans residues 262 to 282 (GVVCFFVVSLGGVLVGAIYGF). The Cytoplasmic portion of the chain corresponds to 283 to 311 (LAAFTSRFTSHTRVIEPLFVFLYSYMAYL). A helical transmembrane segment spans residues 312 to 330 (SSEMFHLSGIMALIACGVV). Topologically, residues 331–352 (MRPYVEANISHKSYTTIKYFLK) are extracellular. Asn-338 carries N-linked (GlcNAc...) asparagine glycosylation. Residues 353-372 (MWSSVSETLIFIFLGVSTVA) form a helical membrane-spanning segment. The Cytoplasmic portion of the chain corresponds to 373–376 (GPHA). A helical membrane pass occupies residues 377–398 (WNWTFVITTVILCLVSRVLGVI). At 399–446 (GLTFIINKFRIVKLTKKDQFIVAYGGLRGAIAFSLGYLLSNSHQMRNL) the chain is on the extracellular side. The chain crosses the membrane as a helical span at residues 447–467 (FLTAIITVIFFTVFVQGMTIR). The Cytoplasmic segment spans residues 468–759 (PLVELLAVKK…KEDDDPFMSC (292 aa)). Ser-641 and Ser-648 each carry phosphoserine; by PKA. A disordered region spans residues 681 to 759 (FPTVHFEQPS…KEDDDPFMSC (79 aa)). Residues 707–719 (VPKRPSLKADIEG) are compositionally biased toward basic and acidic residues.

The protein belongs to the monovalent cation:proton antiporter 1 (CPA1) transporter (TC 2.A.36) family. Post-translationally, activated by cAMP, protein kinase A and protein kinase C.

It is found in the basolateral cell membrane. In terms of biological role, involved in pH regulation to eliminate acids generated by active metabolism or to counter adverse environmental conditions. Major proton extruding system driven by the inward sodium ion chemical gradient. This is Na(+)/H(+) exchanger beta from Oncorhynchus mykiss (Rainbow trout).